We begin with the raw amino-acid sequence, 228 residues long: MKINILSLFPEYFKAFQENSMIAKAIKLGHLEINVINFRDFSKEKHQKVDDTVYGGGDGMLLQVEPIDLALESVPNSYKILLSPQGQVFNQTKAHELAKHQEITLVCGHYEGFDERVLEFVDEELSVGDFILTGGEIPAMLITEAVARLVPGVLKKGSHENESFEGDGLLDYPQYTKPAIYKGLKVPEVLLSGNHALIDRWRKEASYSKTLKNRKDILAKRKEKPHEN.

S-adenosyl-L-methionine-binding positions include G108 and 127 to 132; that span reads VGDFIL.

The protein belongs to the RNA methyltransferase TrmD family. As to quaternary structure, homodimer.

The protein localises to the cytoplasm. The catalysed reaction is guanosine(37) in tRNA + S-adenosyl-L-methionine = N(1)-methylguanosine(37) in tRNA + S-adenosyl-L-homocysteine + H(+). Functionally, specifically methylates guanosine-37 in various tRNAs. The polypeptide is tRNA (guanine-N(1)-)-methyltransferase (Metamycoplasma arthritidis (strain 158L3-1) (Mycoplasma arthritidis)).